A 185-amino-acid chain; its full sequence is Meiotic expression up-regulated protein 31 (185 aa).

The polypeptide is Meiotic expression up-regulated protein 31 (meu31) (Schizosaccharomyces pombe (strain 972 / ATCC 24843) (Fission yeast)).